A 179-amino-acid chain; its full sequence is tRNA-splicing endonuclease (179 aa).

Active-site residues include Y115, H125, and K156.

The protein belongs to the tRNA-intron endonuclease family. Archaeal short subfamily. In terms of assembly, homotetramer; although the tetramer contains four active sites, only two participate in the cleavage. Therefore, it should be considered as a dimer of dimers.

It catalyses the reaction pretRNA = a 3'-half-tRNA molecule with a 5'-OH end + a 5'-half-tRNA molecule with a 2',3'-cyclic phosphate end + an intron with a 2',3'-cyclic phosphate and a 5'-hydroxyl terminus.. Endonuclease that removes tRNA introns. Cleaves pre-tRNA at the 5'- and 3'-splice sites to release the intron. The products are an intron and two tRNA half-molecules bearing 2',3' cyclic phosphate and 5'-OH termini. Recognizes a pseudosymmetric substrate in which 2 bulged loops of 3 bases are separated by a stem of 4 bp. The chain is tRNA-splicing endonuclease (endA) from Methanocaldococcus jannaschii (strain ATCC 43067 / DSM 2661 / JAL-1 / JCM 10045 / NBRC 100440) (Methanococcus jannaschii).